Consider the following 137-residue polypeptide: Small ribosomal subunit protein uS12 (137 aa).

Disordered stretches follow at residues 1–21 (MPTI…KSKS) and 33–57 (KVQT…TPRK). 3-methylthioaspartic acid is present on aspartate 102.

This sequence belongs to the universal ribosomal protein uS12 family. As to quaternary structure, part of the 30S ribosomal subunit. Contacts proteins S8 and S17. May interact with IF1 in the 30S initiation complex.

With S4 and S5 plays an important role in translational accuracy. Functionally, interacts with and stabilizes bases of the 16S rRNA that are involved in tRNA selection in the A site and with the mRNA backbone. Located at the interface of the 30S and 50S subunits, it traverses the body of the 30S subunit contacting proteins on the other side and probably holding the rRNA structure together. The combined cluster of proteins S8, S12 and S17 appears to hold together the shoulder and platform of the 30S subunit. In Streptococcus pneumoniae (strain ATCC 700669 / Spain 23F-1), this protein is Small ribosomal subunit protein uS12.